Reading from the N-terminus, the 62-residue chain is Large ribosomal subunit protein bL33 (62 aa).

It belongs to the bacterial ribosomal protein bL33 family.

In Azobacteroides pseudotrichonymphae genomovar. CFP2, this protein is Large ribosomal subunit protein bL33.